A 527-amino-acid polypeptide reads, in one-letter code: Glutamate--cysteine ligase (527 aa).

The protein belongs to the glutamate--cysteine ligase type 1 family. Type 1 subfamily.

It carries out the reaction L-cysteine + L-glutamate + ATP = gamma-L-glutamyl-L-cysteine + ADP + phosphate + H(+). Its pathway is sulfur metabolism; glutathione biosynthesis; glutathione from L-cysteine and L-glutamate: step 1/2. The polypeptide is Glutamate--cysteine ligase (Bordetella parapertussis (strain 12822 / ATCC BAA-587 / NCTC 13253)).